The chain runs to 430 residues: Adenosylhomocysteinase (430 aa).

Residues T56, D131, and E156 each contribute to the substrate site. 157–159 is an NAD(+) binding site; it reads TTT. Substrate is bound by residues K186 and D190. NAD(+) is bound by residues N191, 220–225, E243, N278, 299–301, and N344; these read GFGDVG and IGH.

The protein belongs to the adenosylhomocysteinase family. Requires NAD(+) as cofactor.

The protein localises to the cytoplasm. The enzyme catalyses S-adenosyl-L-homocysteine + H2O = L-homocysteine + adenosine. It participates in amino-acid biosynthesis; L-homocysteine biosynthesis; L-homocysteine from S-adenosyl-L-homocysteine: step 1/1. Its function is as follows. May play a key role in the regulation of the intracellular concentration of adenosylhomocysteine. This is Adenosylhomocysteinase from Halorhodospira halophila (strain DSM 244 / SL1) (Ectothiorhodospira halophila (strain DSM 244 / SL1)).